Reading from the N-terminus, the 225-residue chain is ATP-dependent dethiobiotin synthetase BioD (225 aa).

13 to 18 contributes to the ATP binding site; that stretch reads NVGKTL. Threonine 17 provides a ligand contact to Mg(2+). The active site involves lysine 38. Substrate is bound at residue threonine 42. ATP is bound by residues aspartate 55, 116–119, 176–177, and 205–207; these read EGAG, NH, and PWL. Mg(2+) contacts are provided by aspartate 55 and glutamate 116.

The protein belongs to the dethiobiotin synthetase family. Homodimer. The cofactor is Mg(2+).

It is found in the cytoplasm. The enzyme catalyses (7R,8S)-7,8-diammoniononanoate + CO2 + ATP = (4R,5S)-dethiobiotin + ADP + phosphate + 3 H(+). It functions in the pathway cofactor biosynthesis; biotin biosynthesis; biotin from 7,8-diaminononanoate: step 1/2. In terms of biological role, catalyzes a mechanistically unusual reaction, the ATP-dependent insertion of CO2 between the N7 and N8 nitrogen atoms of 7,8-diaminopelargonic acid (DAPA, also called 7,8-diammoniononanoate) to form a ureido ring. This chain is ATP-dependent dethiobiotin synthetase BioD, found in Baumannia cicadellinicola subsp. Homalodisca coagulata.